The chain runs to 395 residues: ATP phosphoribosyltransferase regulatory subunit (395 aa).

Belongs to the class-II aminoacyl-tRNA synthetase family. HisZ subfamily. As to quaternary structure, heteromultimer composed of HisG and HisZ subunits.

Its subcellular location is the cytoplasm. Its pathway is amino-acid biosynthesis; L-histidine biosynthesis; L-histidine from 5-phospho-alpha-D-ribose 1-diphosphate: step 1/9. In terms of biological role, required for the first step of histidine biosynthesis. May allow the feedback regulation of ATP phosphoribosyltransferase activity by histidine. In Pseudomonas syringae pv. tomato (strain ATCC BAA-871 / DC3000), this protein is ATP phosphoribosyltransferase regulatory subunit.